Here is a 191-residue protein sequence, read N- to C-terminus: Orotate phosphoribosyltransferase (191 aa).

114–122 (EDVVTTGKS) lines the 5-phospho-alpha-D-ribose 1-diphosphate pocket. Residues Thr-118 and Arg-146 each contribute to the orotate site.

Belongs to the purine/pyrimidine phosphoribosyltransferase family. PyrE subfamily. As to quaternary structure, homodimer. The cofactor is Mg(2+).

It catalyses the reaction orotidine 5'-phosphate + diphosphate = orotate + 5-phospho-alpha-D-ribose 1-diphosphate. Its pathway is pyrimidine metabolism; UMP biosynthesis via de novo pathway; UMP from orotate: step 1/2. In terms of biological role, catalyzes the transfer of a ribosyl phosphate group from 5-phosphoribose 1-diphosphate to orotate, leading to the formation of orotidine monophosphate (OMP). The protein is Orotate phosphoribosyltransferase of Clostridium botulinum (strain ATCC 19397 / Type A).